A 550-amino-acid chain; its full sequence is CTP synthase (550 aa).

The segment at 1 to 270 (MTKYVFVTGG…DNIVCEALGL (270 aa)) is amidoligase domain. Ser-13 lines the CTP pocket. Ser-13 provides a ligand contact to UTP. ATP contacts are provided by residues 14-19 (SLGKGI) and Asp-71. Residues Asp-71 and Glu-144 each contribute to the Mg(2+) site. CTP is bound by residues 151–153 (DIE), 191–196 (KTKPTQ), and Lys-227. UTP is bound by residues 191 to 196 (KTKPTQ) and Lys-227. The 251-residue stretch at 295–545 (TIGMVGKYVD…IRAALEHKAQ (251 aa)) folds into the Glutamine amidotransferase type-1 domain. Gly-356 provides a ligand contact to L-glutamine. Catalysis depends on Cys-383, which acts as the Nucleophile; for glutamine hydrolysis. L-glutamine-binding positions include 384-387 (LGMQ) and Glu-407. Residues 430–459 (VERRDNSSDLGGTMRKGAQRCPIRPGTRAQ) form a disordered region. Arg-473 is an L-glutamine binding site. Active-site residues include His-518 and Glu-520.

Belongs to the CTP synthase family. As to quaternary structure, homotetramer.

It catalyses the reaction UTP + L-glutamine + ATP + H2O = CTP + L-glutamate + ADP + phosphate + 2 H(+). The catalysed reaction is L-glutamine + H2O = L-glutamate + NH4(+). The enzyme catalyses UTP + NH4(+) + ATP = CTP + ADP + phosphate + 2 H(+). It functions in the pathway pyrimidine metabolism; CTP biosynthesis via de novo pathway; CTP from UDP: step 2/2. Allosterically activated by GTP, when glutamine is the substrate; GTP has no effect on the reaction when ammonia is the substrate. The allosteric effector GTP functions by stabilizing the protein conformation that binds the tetrahedral intermediate(s) formed during glutamine hydrolysis. Inhibited by the product CTP, via allosteric rather than competitive inhibition. Catalyzes the ATP-dependent amination of UTP to CTP with either L-glutamine or ammonia as the source of nitrogen. Regulates intracellular CTP levels through interactions with the four ribonucleotide triphosphates. This chain is CTP synthase, found in Bordetella parapertussis (strain 12822 / ATCC BAA-587 / NCTC 13253).